Consider the following 103-residue polypeptide: ATLAPTVLIFPPAPAQLATGAVTIVCVANKYFPDGTVTWEVDGKPLTTGIETSKTPQNSDDCTYNLSSTLTLQKSNYNSHNEYTCQVAQGAGSVVQSFSRKNC.

Residues 5–99 (PTVLIFPPAP…GAGSVVQSFS (95 aa)) form the Ig-like domain. A disulfide bridge connects residues Cys-26 and Cys-85.

The chain is Ig kappa-b5 chain C region from Oryctolagus cuniculus (Rabbit).